A 176-amino-acid polypeptide reads, in one-letter code: Probable fimbrial subunit LpfE (176 aa).

An N-terminal signal peptide occupies residues 1 to 23; it reads MKFKRLLHSGIASLSLVACGVNA.

Belongs to the fimbrial protein family.

It localises to the fimbrium. Part of the lpfABCC'DE fimbrial operon. LP fimbriae may participate in the interaction with eukaryotic cells by assisting in microcolony formation. The protein is Probable fimbrial subunit LpfE (lpfE) of Escherichia coli O157:H7.